Reading from the N-terminus, the 66-residue chain is ATP synthase subunit c (66 aa).

A run of 2 helical transmembrane segments spans residues 3 to 23 (LTFF…GMLM) and 45 to 65 (IMGI…SFVI).

Belongs to the ATPase C chain family. F-type ATPases have 2 components, F(1) - the catalytic core - and F(0) - the membrane proton channel. F(1) has five subunits: alpha(3), beta(3), gamma(1), delta(1), epsilon(1). F(0) has three main subunits: a(1), b(2) and c(10-14). The alpha and beta chains form an alternating ring which encloses part of the gamma chain. F(1) is attached to F(0) by a central stalk formed by the gamma and epsilon chains, while a peripheral stalk is formed by the delta and b chains.

The protein localises to the cell membrane. In terms of biological role, f(1)F(0) ATP synthase produces ATP from ADP in the presence of a proton or sodium gradient. F-type ATPases consist of two structural domains, F(1) containing the extramembraneous catalytic core and F(0) containing the membrane proton channel, linked together by a central stalk and a peripheral stalk. During catalysis, ATP synthesis in the catalytic domain of F(1) is coupled via a rotary mechanism of the central stalk subunits to proton translocation. Functionally, key component of the F(0) channel; it plays a direct role in translocation across the membrane. A homomeric c-ring of between 10-14 subunits forms the central stalk rotor element with the F(1) delta and epsilon subunits. The chain is ATP synthase subunit c (atpE) from Streptococcus oralis.